A 224-amino-acid chain; its full sequence is Large ribosomal subunit protein uL3 (224 aa).

A disordered region spans residues 132 to 153 (SQTKTHGTHEYQRHPGAIGQRK).

Belongs to the universal ribosomal protein uL3 family. Part of the 50S ribosomal subunit. Forms a cluster with proteins L14 and L19.

One of the primary rRNA binding proteins, it binds directly near the 3'-end of the 23S rRNA, where it nucleates assembly of the 50S subunit. In Myxococcus xanthus (strain DK1622), this protein is Large ribosomal subunit protein uL3.